The sequence spans 87 residues: DNA-directed RNA polymerase subunit omega (87 aa).

It belongs to the RNA polymerase subunit omega family. As to quaternary structure, the RNAP catalytic core consists of 2 alpha, 1 beta, 1 beta' and 1 omega subunit. When a sigma factor is associated with the core the holoenzyme is formed, which can initiate transcription.

It catalyses the reaction RNA(n) + a ribonucleoside 5'-triphosphate = RNA(n+1) + diphosphate. Promotes RNA polymerase assembly. Latches the N- and C-terminal regions of the beta' subunit thereby facilitating its interaction with the beta and alpha subunits. The chain is DNA-directed RNA polymerase subunit omega from Pseudomonas putida (strain W619).